The chain runs to 195 residues: MRKAQVTRNTQETQITVAINLDGQGKAELDSGVPFLDHMLDQIARHGMIDLNVAAKGDLHIDAHHTVEDIGIALGQALNRAIGDKKGIFRYGHAYVPLDETLSRVVIDLSGRPGLQFNTTFTRAVIGSFDVDLIQEFFQGFVNHAMMTLHIDNLAGKNAHHQAESIFKAFGRALRMAVTIDPRCDDLIPSTKGVL.

The protein belongs to the imidazoleglycerol-phosphate dehydratase family.

The protein resides in the cytoplasm. The enzyme catalyses D-erythro-1-(imidazol-4-yl)glycerol 3-phosphate = 3-(imidazol-4-yl)-2-oxopropyl phosphate + H2O. Its pathway is amino-acid biosynthesis; L-histidine biosynthesis; L-histidine from 5-phospho-alpha-D-ribose 1-diphosphate: step 6/9. The chain is Imidazoleglycerol-phosphate dehydratase from Nitrosomonas eutropha (strain DSM 101675 / C91 / Nm57).